A 206-amino-acid chain; its full sequence is Glycerol-3-phosphate acyltransferase 1 (206 aa).

The next 5 membrane-spanning stretches (helical) occupy residues 14–34 (IALA…GLIL), 67–87 (ATLL…SYFL), 91–111 (AAII…WIGF), 124–144 (LLGV…AVAF), and 148–168 (YSSL…WILG).

The protein belongs to the PlsY family. As to quaternary structure, probably interacts with PlsX.

It localises to the cell inner membrane. It carries out the reaction an acyl phosphate + sn-glycerol 3-phosphate = a 1-acyl-sn-glycero-3-phosphate + phosphate. The protein operates within lipid metabolism; phospholipid metabolism. Its function is as follows. Catalyzes the transfer of an acyl group from acyl-phosphate (acyl-PO(4)) to glycerol-3-phosphate (G3P) to form lysophosphatidic acid (LPA). This enzyme utilizes acyl-phosphate as fatty acyl donor, but not acyl-CoA or acyl-ACP. This Rhizobium johnstonii (strain DSM 114642 / LMG 32736 / 3841) (Rhizobium leguminosarum bv. viciae) protein is Glycerol-3-phosphate acyltransferase 1.